The chain runs to 521 residues: MAP kinase-activated protein kinase mak-1 (521 aa).

Over residues 1–12 (MMFEYEEDEDPM) the composition is skewed to acidic residues. A disordered region spans residues 1 to 36 (MMFEYEEDEDPMEQQKHEEFKHHSTDHSGSPQENPF). Over residues 13–26 (EQQKHEEFKHHSTD) the composition is skewed to basic and acidic residues. The region spanning 144 to 405 (TISAEIIGIG…IHELMATPLV (262 aa)) is the Protein kinase domain. ATP is bound by residues 150-158 (IGIGESGKV) and lysine 173. Aspartate 266 functions as the Proton acceptor in the catalytic mechanism.

The protein belongs to the protein kinase superfamily. CAMK Ser/Thr protein kinase family. May interact (via protein kinase domain) with unc-22 (via protein kinase and CRD domains). It depends on Mg(2+) as a cofactor. Autophosphorylated in vitro. As to expression, expressed in body wall muscles (at protein level). Expressed in intestine.

Its subcellular location is the cytoplasm. The protein resides in the myofibril. It localises to the sarcomere. The protein localises to the a band. The catalysed reaction is L-seryl-[protein] + ATP = O-phospho-L-seryl-[protein] + ADP + H(+). It carries out the reaction L-threonyl-[protein] + ATP = O-phospho-L-threonyl-[protein] + ADP + H(+). Its function is as follows. Serine/threonine-protein kinase which may play a role in body wall muscle contraction. May phosphorylate unc-22/twitchin. The chain is MAP kinase-activated protein kinase mak-1 from Caenorhabditis elegans.